The sequence spans 583 residues: Peptidyl-prolyl cis-trans isomerase FKBP10 (583 aa).

Positions 1 to 27 are cleaved as a signal peptide; it reads MLRAGPPSHTLLRLPLLQLLLLLLVQA. PPIase FKBP-type domains are found at residues 63–151, 175–263, 287–375, and 400–487; these read GDFV…LDVW, SDFV…IDVH, GDFM…IDFH, and GDFV…VSRE. N-linked (GlcNAc...) asparagine glycosylation is found at N71, N183, and N295. EF-hand domains are found at residues 498 to 533 and 543 to 578; these read WHEDPPAHLFEHMDLNKDGEVPVEEFSTFIKAQVSE and DPEKTIGDMFQNQDRNQDGKITAEELKLKSDEDQDR. Ca(2+) is bound by residues D511, N513, D515, E517, E522, D556, N558, D560, K562, and E567. The disordered stretch occupies residues 534–583; the sequence is GKGRLLPGQDPEKTIGDMFQNQDRNQDGKITAEELKLKSDEDQDRVHEEL. Residues 557-583 show a composition bias toward basic and acidic residues; it reads RNQDGKITAEELKLKSDEDQDRVHEEL. The Prevents secretion from ER signature appears at 580–583; sequence HEEL.

Glycosylated and phosphorylated.

It localises to the endoplasmic reticulum lumen. The catalysed reaction is [protein]-peptidylproline (omega=180) = [protein]-peptidylproline (omega=0). With respect to regulation, inhibited by both FK506 and rapamycin, but not by cyclosporin A. Its function is as follows. PPIases accelerate the folding of proteins during protein synthesis. The chain is Peptidyl-prolyl cis-trans isomerase FKBP10 (FKBP10) from Bos taurus (Bovine).